Consider the following 227-residue polypeptide: Orotidine 5'-phosphate decarboxylase (227 aa).

Substrate contacts are provided by residues aspartate 8, lysine 30, 59–68 (DLKLYDIPNT), threonine 118, arginine 178, glutamine 187, glycine 207, and arginine 208. Lysine 61 acts as the Proton donor in catalysis.

The protein belongs to the OMP decarboxylase family. Type 1 subfamily. Homodimer.

It carries out the reaction orotidine 5'-phosphate + H(+) = UMP + CO2. It participates in pyrimidine metabolism; UMP biosynthesis via de novo pathway; UMP from orotate: step 2/2. In terms of biological role, catalyzes the decarboxylation of orotidine 5'-monophosphate (OMP) to uridine 5'-monophosphate (UMP). This chain is Orotidine 5'-phosphate decarboxylase, found in Nitratiruptor sp. (strain SB155-2).